The chain runs to 104 residues: MIRKAFVMQVNADAHEEYQRRHNPIWPELEAVLKSHGAHHYAIYLDQERNLLFATVEIESEERWNAVASTDVCQRWWKHMRDVMPANPDNSPISAELKEVFYLQ.

A substrate-binding site is contributed by Tyr18. His22 acts as the Proton donor in catalysis. Substrate is bound by residues Tyr41 and 76–77; that span reads WW.

It belongs to the rhamnose mutarotase family. In terms of assembly, homodimer.

It is found in the cytoplasm. The catalysed reaction is alpha-L-rhamnose = beta-L-rhamnose. It participates in carbohydrate metabolism; L-rhamnose metabolism. Functionally, involved in the anomeric conversion of L-rhamnose. The polypeptide is L-rhamnose mutarotase (Salmonella dublin (strain CT_02021853)).